We begin with the raw amino-acid sequence, 314 residues long: Polyamine aminopropyltransferase (314 aa).

The 238-residue stretch at 4–241 folds into the PABS domain; the sequence is GMYFFEHVTP…LNFGFLLASD (238 aa). S-methyl-5'-thioadenosine is bound at residue Gln33. Residues His64 and Glu88 each coordinate spermidine. S-methyl-5'-thioadenosine contacts are provided by residues Asp108 and 140-141; that span reads DA. Residue Asp158 is the Proton acceptor of the active site. An S-methyl-5'-thioadenosine-binding site is contributed by Pro168.

Belongs to the spermidine/spermine synthase family. As to quaternary structure, homodimer or homotetramer.

It is found in the cytoplasm. It catalyses the reaction S-adenosyl 3-(methylsulfanyl)propylamine + putrescine = S-methyl-5'-thioadenosine + spermidine + H(+). The protein operates within amine and polyamine biosynthesis; spermidine biosynthesis; spermidine from putrescine: step 1/1. In terms of biological role, catalyzes the irreversible transfer of a propylamine group from the amino donor S-adenosylmethioninamine (decarboxy-AdoMet) to putrescine (1,4-diaminobutane) to yield spermidine. The polypeptide is Polyamine aminopropyltransferase (Thermus thermophilus (strain ATCC BAA-163 / DSM 7039 / HB27)).